Reading from the N-terminus, the 386-residue chain is MDSSYSDSRPMFVQSPYGGWNQTQMIDSMANPMNNEQGDLHSLSESQSQSQPSQQLQPALKRPRLVDDNLFNPASSFPQPSSSNPWMVPSLNPPPVNKGTANIFYKTRMCAKFRAGTCRNGELCNFAHGIEDLRQPPSNWQEIVGPPPAGQDRERERERERERERPSLAPVVNNNWEDDQKIILRMKLCRKFCFGEECPYGDRCNFIHEDLSKFREDSGKLRESSVISVGATAADQPSDTASNLIEVNRQGSIPVPAPMNNGGVVKTVYWKTRLCMKFDITGQCPFGDKCHFAHGQAELHNSVGRVEGEAMNAVASVNKQAVVPANEAFAMKPITQVTADSSGLNEEGRRKKCLLKWSDSKKINRIYGDWIDDLPVGQKSTKPVES.

Residues M1–S90 are disordered. Residues W20–Q37 show a composition bias toward polar residues. A compositionally biased stretch (low complexity) spans L43–P58. The span at N72 to P85 shows a compositional bias: polar residues. Residues F104 to E131 form a C3H1-type 1 zinc finger. Residues P136–P166 are disordered. The span at Q151–P166 shows a compositional bias: basic and acidic residues. 2 consecutive C3H1-type zinc fingers follow at residues I183 to L211 and Y269 to A297.

This is Zinc finger CCCH domain-containing protein 39 from Arabidopsis thaliana (Mouse-ear cress).